Here is a 321-residue protein sequence, read N- to C-terminus: Glycerol-3-phosphate phosphatase (321 aa).

Residue Asp-34 is the Nucleophile of the active site. Asp-34, Asp-36, and Asp-260 together coordinate Mg(2+). Asp-36 (proton donor) is an active-site residue.

The protein belongs to the HAD-like hydrolase superfamily. CbbY/CbbZ/Gph/YieH family. In terms of assembly, homodimer. Mg(2+) serves as cofactor. As to expression, expression was confirmed in liver, adipose tissue, testis and pancreatic islet.

The enzyme catalyses O-phospho-L-tyrosyl-[protein] + H2O = L-tyrosyl-[protein] + phosphate. It catalyses the reaction sn-glycerol 1-phosphate + H2O = glycerol + phosphate. The catalysed reaction is sn-glycerol 3-phosphate + H2O = glycerol + phosphate. Its function is as follows. Glycerol-3-phosphate phosphatase hydrolyzing glycerol-3-phosphate into glycerol. Thereby, regulates the cellular levels of glycerol-3-phosphate a metabolic intermediate of glucose, lipid and energy metabolism. Was also shown to have a 2-phosphoglycolate phosphatase activity and a tyrosine-protein phosphatase activity. However, their physiological relevance is unclear. In vitro, also has a phosphatase activity toward ADP, ATP, GDP and GTP. The chain is Glycerol-3-phosphate phosphatase from Rattus norvegicus (Rat).